Consider the following 259-residue polypeptide: Proteasome subunit alpha (259 aa).

Belongs to the peptidase T1A family. In terms of assembly, the 20S proteasome core is composed of 14 alpha and 14 beta subunits that assemble into four stacked heptameric rings, resulting in a barrel-shaped structure. The two inner rings, each composed of seven catalytic beta subunits, are sandwiched by two outer rings, each composed of seven alpha subunits. The catalytic chamber with the active sites is on the inside of the barrel. Has a gated structure, the ends of the cylinder being occluded by the N-termini of the alpha-subunits. Is capped at one or both ends by the proteasome regulatory ATPase, PAN.

Its subcellular location is the cytoplasm. Its activity is regulated as follows. The formation of the proteasomal ATPase PAN-20S proteasome complex, via the docking of the C-termini of PAN into the intersubunit pockets in the alpha-rings, triggers opening of the gate for substrate entry. Interconversion between the open-gate and close-gate conformations leads to a dynamic regulation of the 20S proteasome proteolysis activity. In terms of biological role, component of the proteasome core, a large protease complex with broad specificity involved in protein degradation. This is Proteasome subunit alpha from Methanococcus vannielii (strain ATCC 35089 / DSM 1224 / JCM 13029 / OCM 148 / SB).